A 443-amino-acid polypeptide reads, in one-letter code: Threonine/serine transporter TdcC (443 aa).

The next 11 helical transmembrane spans lie at 24 to 44 (WVLG…PISA), 45 to 65 (GIGG…IAFF), 95 to 115 (VGGV…LWIY), 140 to 160 (VVAL…KDLM), 163 to 183 (VMGY…LSLI), 207 to 227 (ILVT…FSPI), 259 to 279 (ASVL…FTLS), 319 to 339 (ASII…LGTL), 363 to 383 (LNMI…YINP), 385 to 405 (ILDL…CLLP), and 423 to 443 (SNYF…YQLM).

The protein belongs to the amino acid/polyamine transporter 2 family. SdaC/TdcC subfamily.

It localises to the cell inner membrane. The enzyme catalyses L-threonine(in) + H(+)(in) = L-threonine(out) + H(+)(out). It catalyses the reaction L-serine(in) + H(+)(in) = L-serine(out) + H(+)(out). Involved in the import of threonine and serine into the cell, with the concomitant import of a proton (symport system). The polypeptide is Threonine/serine transporter TdcC (Edwardsiella piscicida).